Here is a 136-residue protein sequence, read N- to C-terminus: Nucleoside diphosphate kinase (136 aa).

ATP contacts are provided by K10, F58, R86, T92, R104, and N114. H117 functions as the Pros-phosphohistidine intermediate in the catalytic mechanism.

The protein belongs to the NDK family. Homohexamer. The cofactor is Mg(2+).

The protein resides in the cytoplasm. It carries out the reaction a 2'-deoxyribonucleoside 5'-diphosphate + ATP = a 2'-deoxyribonucleoside 5'-triphosphate + ADP. The enzyme catalyses a ribonucleoside 5'-diphosphate + ATP = a ribonucleoside 5'-triphosphate + ADP. In terms of biological role, major role in the synthesis of nucleoside triphosphates other than ATP. The ATP gamma phosphate is transferred to the NDP beta phosphate via a ping-pong mechanism, using a phosphorylated active-site intermediate. This chain is Nucleoside diphosphate kinase, found in Mycobacterium bovis (strain ATCC BAA-935 / AF2122/97).